A 159-amino-acid chain; its full sequence is Ribosomal RNA large subunit methyltransferase H (159 aa).

Residues Gly108 and 127 to 132 contribute to the S-adenosyl-L-methionine site; that span reads FSKMTF.

Belongs to the RNA methyltransferase RlmH family. Homodimer.

It is found in the cytoplasm. The enzyme catalyses pseudouridine(1915) in 23S rRNA + S-adenosyl-L-methionine = N(3)-methylpseudouridine(1915) in 23S rRNA + S-adenosyl-L-homocysteine + H(+). In terms of biological role, specifically methylates the pseudouridine at position 1915 (m3Psi1915) in 23S rRNA. The polypeptide is Ribosomal RNA large subunit methyltransferase H (Clostridium perfringens (strain ATCC 13124 / DSM 756 / JCM 1290 / NCIMB 6125 / NCTC 8237 / Type A)).